The sequence spans 554 residues: Zinc finger protein 426 (554 aa).

Residues 42–112 (VTFDDVAVDF…QGGVLQGWEM (71 aa)) enclose the KRAB domain. A C2H2-type 1; atypical zinc finger spans residues 146 to 174 (CDCEQCGEVFSEHSCLKTHVRTQSTGNTH). C2H2-type zinc fingers lie at residues 224-246 (FECS…MRTH), 280-302 (YKCK…MRTH), 308-330 (YECK…GRTH), 336-358 (YVCK…VRSH), 364-386 (YECK…IRTH), 392-414 (FVCV…LRTH), 420-442 (CECK…MRTH), 448-470 (YTCK…MRIH), 476-498 (YECK…ERTH), 504-526 (YECK…EKTH), and 532-554 (YKCQ…EQIH).

The protein resides in the nucleus. Functionally, may be involved in transcriptional regulation. In Homo sapiens (Human), this protein is Zinc finger protein 426 (ZNF426).